A 358-amino-acid chain; its full sequence is Alternative oxidase, mitochondrial (358 aa).

Residues 152–172 (LIRYVFLESVAGVPGMVAGML) traverse the membrane as a helical segment. E159, E198, and H201 together coordinate Fe cation. A helical membrane pass occupies residues 218-238 (MILGAQGVFFNSFFLCYLFSP). Positions 249, 306, and 309 each coordinate Fe cation.

It belongs to the alternative oxidase family. Fe cation serves as cofactor.

The protein resides in the mitochondrion inner membrane. Functionally, catalyzes cyanide-resistant oxygen consumption. May increase respiration when the cytochrome respiratory pathway is restricted, or in response to low temperatures. The sequence is that of Alternative oxidase, mitochondrial (AOX1) from Monilinia fructicola (Brown rot fungus).